A 732-amino-acid polypeptide reads, in one-letter code: Polyribonucleotide nucleotidyltransferase (732 aa).

The Mg(2+) site is built by Asp-502 and Asp-508. In terms of domain architecture, KH spans 569–628 (PRLTSIQIPVDAIGMVIGKGGETIRSITEETGAEINIDDDGTVTIACSSPEGTKAAVETI). The S1 motif domain maps to 638–712 (GTIYMGKVRD…GKTKFALSIK (75 aa)).

Belongs to the polyribonucleotide nucleotidyltransferase family. Requires Mg(2+) as cofactor.

Its subcellular location is the cytoplasm. It catalyses the reaction RNA(n+1) + phosphate = RNA(n) + a ribonucleoside 5'-diphosphate. Its function is as follows. Involved in mRNA degradation. Catalyzes the phosphorolysis of single-stranded polyribonucleotides processively in the 3'- to 5'-direction. This is Polyribonucleotide nucleotidyltransferase from Chlorobaculum parvum (strain DSM 263 / NCIMB 8327) (Chlorobium vibrioforme subsp. thiosulfatophilum).